The chain runs to 26 residues: Coenzyme PQQ synthesis protein A (26 aa).

Positions 16 to 20 form a cross-link, pyrroloquinoline quinone (Glu-Tyr); it reads EINMY.

The protein belongs to the PqqA family.

The protein operates within cofactor biosynthesis; pyrroloquinoline quinone biosynthesis. Its function is as follows. Required for coenzyme pyrroloquinoline quinone (PQQ) biosynthesis. PQQ is probably formed by cross-linking a specific glutamate to a specific tyrosine residue and excising these residues from the peptide. This Cereibacter sphaeroides (strain ATCC 17029 / ATH 2.4.9) (Rhodobacter sphaeroides) protein is Coenzyme PQQ synthesis protein A.